Here is a 1167-residue protein sequence, read N- to C-terminus: Melanoma receptor tyrosine-protein kinase (1167 aa).

An N-terminal signal peptide occupies residues 1 to 25; the sequence is MEFLRGGAALLQLLLVLSISRCCST. Over 26–642 the chain is Extracellular; that stretch reads DPDRKVCQGT…GCRGDIVSHS (617 aa). Residues N114, N144, and N201 are each glycosylated (N-linked (GlcNAc...) asparagine). Disulfide bonds link C195–C204, C199–C212, C220–C228, C224–C236, C237–C245, C241–C253, C256–C265, C269–C296, C300–C311, C315–C330, and C333–C337. Residues N356, N365, N398, N417, and N501 are each glycosylated (N-linked (GlcNAc...) asparagine). Intrachain disulfides connect C504–C513, C508–C521, C524–C533, C537–C553, C556–C569, C560–C577, C593–C615, C618–C626, and C622–C634. Residue N576 is glycosylated (N-linked (GlcNAc...) asparagine). N-linked (GlcNAc...) asparagine glycosylation is present at N621. A helical transmembrane segment spans residues 643–665; that stretch reads SLAVGLVSGLLITVIVALLIVVL. The Cytoplasmic segment spans residues 666 to 1167; sequence LRRRRIKRKR…QGGALYTPVR (502 aa). Positions 710 to 977 constitute a Protein kinase domain; sequence FKKDRVLGSG…QMARDPSRYL (268 aa). ATP contacts are provided by residues 716 to 724 and K743; that span reads LGSGAFGTV. Residue D835 is the Proton acceptor of the active site.

The protein belongs to the protein kinase superfamily. Tyr protein kinase family. EGF receptor subfamily.

The protein resides in the membrane. The enzyme catalyses L-tyrosyl-[protein] + ATP = O-phospho-L-tyrosyl-[protein] + ADP + H(+). Functionally, probable receptor with tyrosine-protein kinase activity. This is Melanoma receptor tyrosine-protein kinase (xmrk) from Xiphophorus maculatus (Southern platyfish).